The sequence spans 513 residues: Probable G-protein coupled receptor 176 (513 aa).

The segment at 1–25 (MGHNGSWVSPNTSHPRNTSGAQAGA) is disordered. Topologically, residues 1–41 (MGHNGSWVSPNTSHPRNTSGAQAGANSSAFGELSEAQLYRQ) are extracellular. N-linked (GlcNAc...) asparagine glycans are attached at residues Asn4, Asn11, Asn17, and Asn26. A helical membrane pass occupies residues 42 to 64 (FTTTVQVVIFIGSLLGNFTVLWS). Topologically, residues 65–77 (TCRTTVFKSVTNR) are cytoplasmic. A helical membrane pass occupies residues 78-98 (FIKNLACSGICASVVCVPFDI). At 99–108 (ILSTSPHCCW) the chain is on the extracellular side. A helical membrane pass occupies residues 109 to 129 (WIYTMLFCKVLKFLHKVFCSV). Residues 130-157 (TVLSFPAIALDRYYSVLYPLERKISDAK) lie on the Cytoplasmic side of the membrane. A helical transmembrane segment spans residues 158–177 (SRELVMYIWAHAVVASVPVF). The Extracellular portion of the chain corresponds to 178-204 (AVTNVADIYATSTCTEVWSNSLGHLVY). The chain crosses the membrane as a helical span at residues 205 to 225 (VLIYNVTTVIVPVAVVFLFLI). Over 226–264 (LIRRALSASQKKKVIIAALRTPQNTISIPYASQREAELH) the chain is Cytoplasmic. Residues 265–285 (ATLLSMVTVFILCSVPYATLV) traverse the membrane as a helical segment. Residues 286–301 (VYQTVLNVPNTSVFLL) lie on the Extracellular side of the membrane. Residues 302 to 322 (LTAIWLPKVSLLANPVLFLTV) traverse the membrane as a helical segment. Over 323-513 (NRSVRKCLVG…KVSIFPKVDS (191 aa)) the chain is Cytoplasmic. Residues 404-432 (VLTSSPEGEESQLAPSVPPPGTVDSVSRV) form a disordered region.

Belongs to the G-protein coupled receptor 1 family. Expressed in brain, lung, heart, stomach, intestine, cultured aortic smooth muscle cells and cardiac myocytes.

It is found in the cell membrane. Its function is as follows. Orphan receptor involved in normal circadian rhythm behavior. Acts through the G-protein subclass G(z)-alpha and has an agonist-independent basal activity to repress cAMP production. The chain is Probable G-protein coupled receptor 176 (Gpr176) from Rattus norvegicus (Rat).